The sequence spans 316 residues: Transaldolase (316 aa).

The Schiff-base intermediate with substrate role is filled by Lys132.

Belongs to the transaldolase family. Type 1 subfamily. Homodimer.

It is found in the cytoplasm. The enzyme catalyses D-sedoheptulose 7-phosphate + D-glyceraldehyde 3-phosphate = D-erythrose 4-phosphate + beta-D-fructose 6-phosphate. Its pathway is carbohydrate degradation; pentose phosphate pathway; D-glyceraldehyde 3-phosphate and beta-D-fructose 6-phosphate from D-ribose 5-phosphate and D-xylulose 5-phosphate (non-oxidative stage): step 2/3. Its function is as follows. Transaldolase is important for the balance of metabolites in the pentose-phosphate pathway. This is Transaldolase from Aliivibrio fischeri (strain ATCC 700601 / ES114) (Vibrio fischeri).